We begin with the raw amino-acid sequence, 210 residues long: Coatomer subunit zeta-2 (210 aa).

The segment covering 1–12 (MQRPEAWPRPHP) has biased composition (basic and acidic residues). The interval 1–34 (MQRPEAWPRPHPGEGAAAAQAGGPAPPARAGEPS) is disordered. A compositionally biased stretch (low complexity) spans 13-34 (GEGAAAAQAGGPAPPARAGEPS).

This sequence belongs to the adaptor complexes small subunit family. In terms of assembly, oligomeric complex.

It localises to the cytoplasm. The protein localises to the endoplasmic reticulum-Golgi intermediate compartment membrane. Its subcellular location is the golgi apparatus membrane. The protein resides in the cytoplasmic vesicle. It is found in the COPI-coated vesicle membrane. Its function is as follows. The coatomer is a cytosolic protein complex that binds to dilysine motifs and reversibly associates with Golgi non-clathrin-coated vesicles, which further mediate biosynthetic protein transport from the ER, via the Golgi up to the trans Golgi network. Coatomer complex is required for budding from Golgi membranes, and is essential for the retrograde Golgi-to-ER transport of dilysine-tagged proteins. The zeta subunit may be involved in regulating the coat assembly and, hence, the rate of biosynthetic protein transport due to its association-dissociation properties with the coatomer complex. This chain is Coatomer subunit zeta-2 (COPZ2), found in Homo sapiens (Human).